A 422-amino-acid polypeptide reads, in one-letter code: UDP-N-acetylglucosamine 1-carboxyvinyltransferase (422 aa).

Phosphoenolpyruvate is bound at residue 22-23 (KN). Arginine 94 provides a ligand contact to UDP-N-acetyl-alpha-D-glucosamine. The Proton donor role is filled by cysteine 118. The residue at position 118 (cysteine 118) is a 2-(S-cysteinyl)pyruvic acid O-phosphothioketal. Residues 123–127 (RPVDL), 163–166 (KVSV), aspartate 308, and isoleucine 330 each bind UDP-N-acetyl-alpha-D-glucosamine.

Belongs to the EPSP synthase family. MurA subfamily.

It localises to the cytoplasm. The catalysed reaction is phosphoenolpyruvate + UDP-N-acetyl-alpha-D-glucosamine = UDP-N-acetyl-3-O-(1-carboxyvinyl)-alpha-D-glucosamine + phosphate. Its pathway is cell wall biogenesis; peptidoglycan biosynthesis. In terms of biological role, cell wall formation. Adds enolpyruvyl to UDP-N-acetylglucosamine. The polypeptide is UDP-N-acetylglucosamine 1-carboxyvinyltransferase (Yersinia enterocolitica serotype O:8 / biotype 1B (strain NCTC 13174 / 8081)).